The chain runs to 157 residues: Ribonuclease H (157 aa).

The 146-residue stretch at 1 to 146 folds into the RNase H type-1 domain; that stretch reads MPELFAYTDG…ADALAREGMA (146 aa). 4 residues coordinate Mg(2+): D9, E52, D74, and D138.

Belongs to the RNase H family. In terms of assembly, monomer. Requires Mg(2+) as cofactor.

It is found in the cytoplasm. The enzyme catalyses Endonucleolytic cleavage to 5'-phosphomonoester.. In terms of biological role, endonuclease that specifically degrades the RNA of RNA-DNA hybrids. The chain is Ribonuclease H from Dinoroseobacter shibae (strain DSM 16493 / NCIMB 14021 / DFL 12).